Reading from the N-terminus, the 567-residue chain is Hexose transporter HXT15 (567 aa).

Polar residues predominate over residues Met1–Ala19. The interval Met1–Trp32 is disordered. Residues Met1–Leu55 are Cytoplasmic-facing. A helical membrane pass occupies residues Gly56–Trp76. The Extracellular portion of the chain corresponds to Asp77 to Gly112. The helical transmembrane segment at Leu113–Ala133 threads the bilayer. The Cytoplasmic segment spans residues Asp134–Arg139. Residues Leu140 to Asn160 traverse the membrane as a helical segment. Over His161 to Lys170 the chain is Extracellular. A helical transmembrane segment spans residues Ile171–Ile191. The Cytoplasmic segment spans residues Ala192–Arg197. Residues Gly198–Ser218 form a helical membrane-spanning segment. Residues Val219–Arg232 are Extracellular-facing. A helical membrane pass occupies residues Ile233–Pro253. At Glu254–Glu336 the chain is on the cytoplasmic side. Residues Asn337–Thr353 traverse the membrane as a helical segment. Residues Asp354–Ser359 are Extracellular-facing. The chain crosses the membrane as a helical span at residues Ile360–Val377. Topologically, residues Asp378–Lys384 are cytoplasmic. The helical transmembrane segment at Cys385 to Val405 threads the bilayer. Topologically, residues Lys406 to Val427 are extracellular. The helical transmembrane segment at Phe428–Val448 threads the bilayer. Topologically, residues Ala449–Thr465 are cytoplasmic. Residues Ala466–Ile486 form a helical membrane-spanning segment. Residue His487 is a topological domain, extracellular. Residues Phe488–Phe508 form a helical membrane-spanning segment. The Cytoplasmic portion of the chain corresponds to Leu509–Asn567. The segment at Ser533–Ser555 is disordered. Positions Ser545–Ser555 are enriched in basic and acidic residues.

Belongs to the major facilitator superfamily. Sugar transporter (TC 2.A.1.1) family.

It localises to the membrane. Functionally, probable glucose transporter. In Saccharomyces cerevisiae (strain ATCC 204508 / S288c) (Baker's yeast), this protein is Hexose transporter HXT15 (HXT15).